Consider the following 1135-residue polypeptide: Envelopment polyprotein (1135 aa).

Positions 1–18 (MGIWKWLVMASLVWPVLT) are cleaved as a signal peptide. The Lumenal segment spans residues 19 to 485 (LRNVYDMKIE…VPGFHGWATA (467 aa)). Cystine bridges form between Cys-29–Cys-151, Cys-63–Cys-157, Cys-109–Cys-128, Cys-133–Cys-138, Cys-175–Cys-185, Cys-210–Cys-247, Cys-234–Cys-351, Cys-376–Cys-435, Cys-380–Cys-389, Cys-405–Cys-424, and Cys-452–Cys-475. Asn-134 carries an N-linked (GlcNAc...) asparagine; by host glycan. Residues Asn-235 and Asn-347 are each glycosylated (N-linked (GlcNAc...) asparagine; by host). Asn-399 carries N-linked (GlcNAc...) asparagine; by host glycosylation. A helical membrane pass occupies residues 486-506 (ALLVTFCFGWVLIPAITFIIL). Residues 507-627 (TILKFIANIF…LNLFRYKSRC (121 aa)) lie on the Cytoplasmic side of the membrane. Residues 516-533 (FHTSNQENRLKSVLRKIK) are binding to the ribonucleoprotein. 2 CCHC-type zinc fingers span residues 545–565 (CDVC…GVSC) and 570–591 (CPYC…YKVC). 3 binding to the ribonucleoprotein regions span residues 588–605 (YKVC…KKTV), 592–603 (QVTHRFRDDLKK), and 611–625 (TPGC…RYKS). Positions 611–634 (TPGCYRTLNLFRYKSRCYIFTMWI) constitute an ITAM domain. A YxxL motif is present at residues 615 to 618 (YRTL). The helical transmembrane segment at 628–648 (YIFTMWIFLLVLESILWAASA) threads the bilayer. The Lumenal portion of the chain corresponds to 649–1105 (SETPLTPVWN…EWISGIFSGN (457 aa)). Intrachain disulfides connect Cys-735/Cys-770, Cys-739/Cys-777, Cys-751/Cys-885, Cys-765/Cys-896, Cys-780/Cys-904, Cys-806/Cys-815, Cys-823/Cys-832, and Cys-863/Cys-867. The fusion loop stretch occupies residues 757–777 (YQYETSWGCNPSDCPGVGTGC). Asn-928 is a glycosylation site (N-linked (GlcNAc...) asparagine; by host). 5 disulfide bridges follow: Cys-970–Cys-1000, Cys-993–Cys-1045, Cys-1010–Cys-1015, Cys-1046–Cys-1051, and Cys-1085–Cys-1089. Residues 1106-1126 (WIVLIVLCVFLLFSLVLLSIL) form a helical membrane-spanning segment. The segment at 1122-1135 (LLSILCPVRKHKKS) is binding to the ribonucleoprotein. Residues 1127–1135 (CPVRKHKKS) are Cytoplasmic-facing.

This sequence belongs to the hantavirus envelope glycoprotein family. Homodimer. Homotetramer; forms heterotetrameric Gn-Gc spikes in the pre-fusion conformation. Interacts (via C-terminus) with the nucleoprotein. Interacts with host TUFM; this interaction contributes to the virus-induced degradation of mitochondria by autophagy, which leads to degradation of host MAVS and inhibition of type I interferon (IFN) responses. Interacts with host MAP1LC3B; this interaction contributes to the virus-induced degradation of mitochondria by autophagy, which leads to degradation of host MAVS and inhibition of type I interferon (IFN) responses. In terms of assembly, homodimer. Homotetramer; forms heterotetrameric Gn-Gc spikes in the pre-fusion conformation. Homotrimer; forms homotrimer in the post-fusion conformation at acidic pH. Interacts (via C-terminus) with the nucleoprotein. In terms of processing, envelope polyprotein precursor is quickly cleaved in vivo just after synthesis, presumably by host signal peptidase.

The protein resides in the virion membrane. It localises to the host cell surface. It is found in the host Golgi apparatus membrane. The protein localises to the host endoplasmic reticulum membrane. Its subcellular location is the host mitochondrion. Its function is as follows. Forms homotetramers with glycoprotein C at the surface of the virion. Attaches the virion to host cell receptors including integrin ITGAV/ITGB3. This attachment induces virion internalization predominantly through clathrin-dependent endocytosis. May also bind to host C1QBP for virus entry into the host cell. Mediates the assembly and budding of infectious virus particles through its interaction with the nucleocapsid protein and the viral genome. May dysregulate normal immune and endothelial cell responses through an ITAM motif. Translocates to mitochondria, binds to host TUFM and recruits MAP1LC3B. These interactions induce mitochondrial autophagy and therefore destruction of host MAVS leading to inhibition of type I interferon (IFN) responses. Concomitant breakdown of glycoprotein N is apparently prevented by the nucleoprotein that may inhibit Gn-stimulated autophagosome-lysosome fusion. Interacts with the viral genomic RNA. Forms homotetramers with glycoprotein N at the surface of the virion. Attaches the virion to host cell receptors including integrin ITGAV/ITGB3. This attachment induces virion internalization predominantly through clathrin-dependent endocytosis. May also bind to host C1QBP for virus entry into the host cell. Class II fusion protein that promotes fusion of viral membrane with host endosomal membrane after endocytosis of the virion. This chain is Envelopment polyprotein (GP), found in Hantaan virus (strain Lee) (Lee virus).